The sequence spans 404 residues: Protrudin (404 aa).

The interval 1–20 (MQTSEREGCGPEVSPSTVPE) is disordered. Residues 1–66 (MQTSEREGCG…AGDGVRYLLR (66 aa)) are Cytoplasmic-facing. Residues 1–92 (MQTSEREGCG…LFLTLNEGAW (92 aa)) form a sufficient for homooligomerization region. Residues 1–205 (MQTSEREGCG…LYLLPLCWVL (205 aa)) are sufficient for localization to endoplasmic reticulum tubular network and for interactions with REEP1, REEP5, ATL1, ATL2, ATL3 and SPAST. Positions 51 to 64 (LEPLKDAGDGVRYL) are necessary for interaction with RAB11A and function in neurite outgrowth. Residues 67–87 (WQTPLCSLLTCLGLNVLFLTL) traverse the membrane as a helical segment. Asn88 is a topological domain (lumenal). A helical transmembrane segment spans residues 89–109 (EGAWYSVGALMISVPALLGYL). The Cytoplasmic segment spans residues 110–187 (QEGCQARLSE…NPAVSSQFYG (78 aa)). The segment at residues 188–208 (ALLGTVCMLYLLPLCWVLALL) is an intramembrane region (helical). At 209 to 404 (NSTLFLGNVE…CASCNQTLSK (196 aa)) the chain is on the cytoplasmic side. The segment at 234 to 286 (MNPKQEESAFESPPPSDAGGKGALVDCTPAPTPTEDLTPGSVEEAEEAEPDEE) is disordered. The interval 271-354 (TPGSVEEAEE…GCSATFSVLK (84 aa)) is necessary for interaction with KIF5A. Residues 276–286 (EEAEEAEPDEE) are compositionally biased toward acidic residues. Residues 286–292 (EFKDAIE) form a necessary for interaction with VAPA region. The FYVE-type zinc-finger motif lies at 337–403 (TNNYGSCTGC…VCASCNQTLS (67 aa)). Positions 343, 346, 359, 362, 367, 370, 395, and 398 each coordinate Zn(2+).

In terms of assembly, can form homooligomers (monomers, dimers and tetramers). Interacts with RAB11A (GDP-bound form); regulates RAB11A. Interacts with FKBP8; may negatively regulate ZFYVE27 phosphorylation. Interacts with VAPA (via MSP domain); may regulate ZFYVE27 retention in the endoplasmic reticulum and its function in cell projections formation. Interacts with VAPB (via MSP domain). Interacts with RAB11B (GDP-bound form), REEP1, REEP5, ATL1, ATL2, ATL3, SPAST, SURF4, KIF5A, KIF5B, KIF5C and RTN3. Phosphorylated. Phosphorylation is induced by NGF through the MAPK/ERK pathway and modulates interaction with RAB11A.

The protein localises to the recycling endosome membrane. It is found in the endoplasmic reticulum membrane. The protein resides in the cell projection. Its subcellular location is the growth cone membrane. Functionally, key regulator of RAB11-dependent vesicular trafficking during neurite extension through polarized membrane transport. Promotes axonal elongation and contributes to the establishment of neuronal cell polarity. Involved in nerve growth factor-induced neurite formation in VAPA-dependent manner. Contributes to both the formation and stabilization of the tubular ER network. Involved in ER morphogenesis by regulating the sheet-to-tubule balance and possibly the density of tubule interconnections. Acts as an adapter protein that facilitates the interaction of KIF5A with VAPA, VAPB, SURF4, RAB11A, RAB11B and RTN3 and the ZFYVE27-KIF5A complex contributes to the transport of these proteins in neurons. Can induce formation of neurite-like membrane protrusions in non-neuronal cells in a KIF5A/B-dependent manner. This Bos taurus (Bovine) protein is Protrudin (ZFYVE27).